The sequence spans 1043 residues: MLNYETIINGASSALNIVSRALGYRVPLAKSLALVAGSCVVYKIIVHRRTLVAFLVIGPYATVVQHRLPMALQRAIIEYTREDREISLFPQNSIVSAEHARKADNGHPISGGTRDVARETISLAIRAAGFRHYEISPARQSPAEAASHQHYAAADLVRAATEDKIQDGDVVVAIDIDYYLRDIDRYLGRGVPFMAYTFNPVEVAGRDGDSFFRITNNQVTFDVSGGGSWSHEVWDWCAFGEFIETRDASWLAWFARAVGLTKSQIHKVHYCRPWPQSPHRALVWCLPVASYWRFTFIPTDLHTRTLRRVRYQDTSRPGWNSIVSTGSEGLNISLGREGADHCVTIPKVHYDMLMGLSSAQSLSSRMIGLKYTDPSVLATVAQYYQGKNVEVADADRIGRAINPKVHWPAHVEVDEAEVSARVYASPLVSDENMMPMIKRWETLSLSLDRRVTFQRNPKVPGKRLRAYAIEFVDLVVPERGVGVPYSLEDTAAMLDKPSQTLAIQQVWETVDMPPRRLIEAFVKNEPTMKAGRIISSFADMRFLLRFSSYTLAFRDQVLHAEHNRHWFCPGLTPEQIATKVVDYVSGVEEPSEGDFSNFDGTVSEWLQRHVMNAVYLRYFNHRAQRDLRSYTDMLVSCPARAKRFGFAYDAGVGVKSGSPTTCDLNTVCNGFLQYCSIRMTHPELTPIDAFRLIGLAFGDDSLFERRFAKNYAKVSAEVGMVLKIERFDPAQGITFLARVYPDPYTSTTSFQDPLRTWRKLHLTTRDPTIPLATAAIDRVEGYLVTDGLSPLTGAYCRMVKRVYEAGGAEDAAKRRSRKSHSREKPYWLTVGGAWPQDVKDVDLMFQCAAARTGVDLETLRSLDQRLGEITDVWADITINRDNEPNPYKDTLDLEGPADGRVDDRVFQNDKHVMRLRANQVTSSQAGAAGSGDASNDPNAHDRGSQRQQGSASVLRVPDRAAPAGVSSDEQPAHQTASRSSASRGGAGPGRGGRRRPGPPAKTTAGGARDGNQARAPTSGPSKRQAEGRSRSSRGPAGSRGRGK.

A helical transmembrane segment spans residues 26 to 42 (VPLAKSLALVAGSCVVY). Residues 43–1043 (KIIVHRRTLV…GPAGSRGRGK (1001 aa)) are cytoplasmic. The segment at 105–291 (NGHPISGGTR…LVWCLPVASY (187 aa)) is capping. In terms of domain architecture, RdRp catalytic spans 588–713 (EEPSEGDFSN…ERRFAKNYAK (126 aa)). Asp-699 serves as the catalytic For RdRp/TNTase activity. Disordered stretches follow at residues 879–902 (NRDNEPNPYKDTLDLEGPADGRVD) and 918–1043 (NQVT…GRGK). Composition is skewed to low complexity over residues 922 to 934 (SSQAGAAGSGDAS) and 1032 to 1043 (SRGPAGSRGRGK).

Belongs to the nodaviridae RNA polymerase family. In terms of assembly, homododecamer. Forms 2 stacked rings of 35-nm in diameter, arranged in a crown-like structure at the opening of virus-induced replication vesicles. Interacts with protein B2. Requires Mn(2+) as cofactor.

Its subcellular location is the host mitochondrion outer membrane. The enzyme catalyses RNA(n) + a ribonucleoside 5'-triphosphate = RNA(n+1) + diphosphate. Its function is as follows. RNA-dependent RNA polymerase, which replicates the viral genome composed of 2 RNA segments, RNA1 and RNA2. Does not need an exogenous primer. Also possesses a terminal nucleotidyl transferase (TNTase) activity. The TNTase catalyzes the addition of nucleotide to the 3'-end of plus- and minus-stranded RNAs, probably to repair the 3'-end nucleotide loss. Forms the open necked connection to the cytosol of the virus-induced replication vesicles. Mediates viral RNA1 recruitment. The protein is RNA-directed RNA polymerase of Nodamura virus (strain Mag115) (NoV).